The sequence spans 208 residues: ATP-dependent Clp protease proteolytic subunit (208 aa).

The Nucleophile role is filled by S106. The active site involves H131.

Belongs to the peptidase S14 family. In terms of assembly, fourteen ClpP subunits assemble into 2 heptameric rings which stack back to back to give a disk-like structure with a central cavity, resembling the structure of eukaryotic proteasomes.

Its subcellular location is the cytoplasm. It carries out the reaction Hydrolysis of proteins to small peptides in the presence of ATP and magnesium. alpha-casein is the usual test substrate. In the absence of ATP, only oligopeptides shorter than five residues are hydrolyzed (such as succinyl-Leu-Tyr-|-NHMec, and Leu-Tyr-Leu-|-Tyr-Trp, in which cleavage of the -Tyr-|-Leu- and -Tyr-|-Trp bonds also occurs).. Cleaves peptides in various proteins in a process that requires ATP hydrolysis. Has a chymotrypsin-like activity. Plays a major role in the degradation of misfolded proteins. The chain is ATP-dependent Clp protease proteolytic subunit from Roseobacter denitrificans (strain ATCC 33942 / OCh 114) (Erythrobacter sp. (strain OCh 114)).